The primary structure comprises 352 residues: Small ribosomal subunit biogenesis GTPase RsgA (352 aa).

The region spanning 109–277 is the CP-type G domain; that stretch reads DTVLKRPDMY…LIDSPGIREF (169 aa). GTP is bound by residues 165-168 and 219-227; these read NKAD and GQSGVGKSS. Zn(2+) is bound by residues Cys301, Cys306, His308, and Cys314.

Belongs to the TRAFAC class YlqF/YawG GTPase family. RsgA subfamily. Monomer. Associates with 30S ribosomal subunit, binds 16S rRNA. Zn(2+) serves as cofactor.

Its subcellular location is the cytoplasm. Functionally, one of several proteins that assist in the late maturation steps of the functional core of the 30S ribosomal subunit. Helps release RbfA from mature subunits. May play a role in the assembly of ribosomal proteins into the subunit. Circularly permuted GTPase that catalyzes slow GTP hydrolysis, GTPase activity is stimulated by the 30S ribosomal subunit. The chain is Small ribosomal subunit biogenesis GTPase RsgA from Alcanivorax borkumensis (strain ATCC 700651 / DSM 11573 / NCIMB 13689 / SK2).